We begin with the raw amino-acid sequence, 247 residues long: 2,3-bisphosphoglycerate-dependent phosphoglycerate mutase (247 aa).

Residues 8–15 (RHGESQWN), 21–22 (TG), arginine 60, 87–90 (ERHY), lysine 98, 114–115 (RR), and 183–184 (GN) contribute to the substrate site. Residue histidine 9 is the Tele-phosphohistidine intermediate of the active site. Catalysis depends on glutamate 87, which acts as the Proton donor/acceptor.

This sequence belongs to the phosphoglycerate mutase family. BPG-dependent PGAM subfamily.

It carries out the reaction (2R)-2-phosphoglycerate = (2R)-3-phosphoglycerate. Its pathway is carbohydrate degradation; glycolysis; pyruvate from D-glyceraldehyde 3-phosphate: step 3/5. In terms of biological role, catalyzes the interconversion of 2-phosphoglycerate and 3-phosphoglycerate. The polypeptide is 2,3-bisphosphoglycerate-dependent phosphoglycerate mutase (Prosthecochloris aestuarii (strain DSM 271 / SK 413)).